The following is a 300-amino-acid chain: MSYRELVVELAREHAEALSDALLDLGALSVSVEDADADTPDEQPLFGEPGLVPDRTAWQHSRVVALLSADHEPAVLLAAAANEIGLAETPKFVVREVEEQDWVRLTQSQFEPIPIGERIWVVPSWHDAPDPDALVLELDPGLAFGTGSHPTTRLCMEWLEQSVKPGQSVLDYGCGSGILAILAKKCGANPVIGIDIDPQAVESARQNSERNRAEVTYGLPDACPEGEFDIVVANILSNPLKLMASMLASKVKPGGRIALSGVLARQADEVAAVYARYVDISVWREHEGWVCLAGTRRESH.

S-adenosyl-L-methionine contacts are provided by Thr152, Gly173, Asp195, and Asn234.

The protein belongs to the methyltransferase superfamily. PrmA family.

The protein localises to the cytoplasm. It carries out the reaction L-lysyl-[protein] + 3 S-adenosyl-L-methionine = N(6),N(6),N(6)-trimethyl-L-lysyl-[protein] + 3 S-adenosyl-L-homocysteine + 3 H(+). Functionally, methylates ribosomal protein L11. This chain is Ribosomal protein L11 methyltransferase, found in Burkholderia orbicola (strain MC0-3).